The sequence spans 676 residues: Rho guanine nucleotide exchange factor 37 (676 aa).

The disordered stretch occupies residues 1-26 (MADFETDEASSKSESPEQEGQGSEDK). A DH domain is found at 30 to 213 (HQRLAIRELI…QDVNSNINEY (184 aa)). Positions 254–455 (LKQEAGLVPR…LPHRHVSEPD (202 aa)) constitute a BAR domain. SH3 domains lie at 506–569 (GPGK…LYHP) and 603–666 (PTMS…RTPS). Disordered stretches follow at residues 568–601 (HPINPSEKEPRRQTGMPEDYWLPTPEPTQPSVPT) and 657–676 (PSNFLARTPSPTPRGWNLPS).

May act as a guanine nucleotide exchange factor (GEF). The protein is Rho guanine nucleotide exchange factor 37 (Arhgef37) of Rattus norvegicus (Rat).